The chain runs to 258 residues: Imidazole glycerol phosphate synthase subunit HisF (258 aa).

Catalysis depends on residues Asp-11 and Asp-130.

This sequence belongs to the HisA/HisF family. Heterodimer of HisH and HisF.

It is found in the cytoplasm. It catalyses the reaction 5-[(5-phospho-1-deoxy-D-ribulos-1-ylimino)methylamino]-1-(5-phospho-beta-D-ribosyl)imidazole-4-carboxamide + L-glutamine = D-erythro-1-(imidazol-4-yl)glycerol 3-phosphate + 5-amino-1-(5-phospho-beta-D-ribosyl)imidazole-4-carboxamide + L-glutamate + H(+). The protein operates within amino-acid biosynthesis; L-histidine biosynthesis; L-histidine from 5-phospho-alpha-D-ribose 1-diphosphate: step 5/9. Its function is as follows. IGPS catalyzes the conversion of PRFAR and glutamine to IGP, AICAR and glutamate. The HisF subunit catalyzes the cyclization activity that produces IGP and AICAR from PRFAR using the ammonia provided by the HisH subunit. The sequence is that of Imidazole glycerol phosphate synthase subunit HisF from Yersinia pseudotuberculosis serotype O:3 (strain YPIII).